Reading from the N-terminus, the 80-residue chain is Cell division activator CedA (80 aa).

The protein belongs to the CedA family.

Activates the cell division inhibited by chromosomal DNA over-replication. The sequence is that of Cell division activator CedA from Citrobacter koseri (strain ATCC BAA-895 / CDC 4225-83 / SGSC4696).